The sequence spans 305 residues: UDP-3-O-acyl-N-acetylglucosamine deacetylase (305 aa).

Residues histidine 79, histidine 238, and aspartate 242 each contribute to the Zn(2+) site. The active-site Proton donor is the histidine 265.

Belongs to the LpxC family. It depends on Zn(2+) as a cofactor.

It carries out the reaction a UDP-3-O-[(3R)-3-hydroxyacyl]-N-acetyl-alpha-D-glucosamine + H2O = a UDP-3-O-[(3R)-3-hydroxyacyl]-alpha-D-glucosamine + acetate. It functions in the pathway glycolipid biosynthesis; lipid IV(A) biosynthesis; lipid IV(A) from (3R)-3-hydroxytetradecanoyl-[acyl-carrier-protein] and UDP-N-acetyl-alpha-D-glucosamine: step 2/6. Catalyzes the hydrolysis of UDP-3-O-myristoyl-N-acetylglucosamine to form UDP-3-O-myristoylglucosamine and acetate, the committed step in lipid A biosynthesis. In Salmonella agona (strain SL483), this protein is UDP-3-O-acyl-N-acetylglucosamine deacetylase.